Consider the following 439-residue polypeptide: Xaa-Pro dipeptidase (439 aa).

The Mn(2+) site is built by D244, D255, H335, E380, and E419.

This sequence belongs to the peptidase M24B family. Bacterial-type prolidase subfamily. Mn(2+) serves as cofactor.

It carries out the reaction Xaa-L-Pro dipeptide + H2O = an L-alpha-amino acid + L-proline. Splits dipeptides with a prolyl residue in the C-terminal position. The chain is Xaa-Pro dipeptidase from Shewanella sp. (strain MR-7).